The primary structure comprises 70 residues: Sec-independent protein translocase protein TatA (70 aa).

A helical transmembrane segment spans residues 1–21 (MGSFSIWHWLIVLVVVLLIFG). The disordered stretch occupies residues 46–70 (DAPKISESDKGGHTIDAEVKDKQNS).

The protein belongs to the TatA/E family. The Tat system comprises two distinct complexes: a TatABC complex, containing multiple copies of TatA, TatB and TatC subunits, and a separate TatA complex, containing only TatA subunits. Substrates initially bind to the TatABC complex, which probably triggers association of the separate TatA complex to form the active translocon.

It localises to the cell inner membrane. Functionally, part of the twin-arginine translocation (Tat) system that transports large folded proteins containing a characteristic twin-arginine motif in their signal peptide across membranes. TatA could form the protein-conducting channel of the Tat system. The protein is Sec-independent protein translocase protein TatA of Thiobacillus denitrificans (strain ATCC 25259 / T1).